The sequence spans 109 residues: Large ribosomal subunit protein eL30 (109 aa).

It belongs to the eukaryotic ribosomal protein eL30 family.

This chain is Large ribosomal subunit protein eL30, found in Methanopyrus kandleri (strain AV19 / DSM 6324 / JCM 9639 / NBRC 100938).